The chain runs to 286 residues: NAD kinase (286 aa).

The active-site Proton acceptor is Asp-67. NAD(+)-binding positions include 67 to 68 (DG), Arg-72, 141 to 142 (ND), Arg-152, Asp-171, 182 to 187 (TAYSLS), and Gln-242.

The protein belongs to the NAD kinase family. Requires a divalent metal cation as cofactor.

It localises to the cytoplasm. The catalysed reaction is NAD(+) + ATP = ADP + NADP(+) + H(+). Its function is as follows. Involved in the regulation of the intracellular balance of NAD and NADP, and is a key enzyme in the biosynthesis of NADP. Catalyzes specifically the phosphorylation on 2'-hydroxyl of the adenosine moiety of NAD to yield NADP. This chain is NAD kinase, found in Ruminiclostridium cellulolyticum (strain ATCC 35319 / DSM 5812 / JCM 6584 / H10) (Clostridium cellulolyticum).